The sequence spans 255 residues: Cytosolic Fe-S cluster assembly factor Nubp2 homolog (255 aa).

Position 14 to 21 (14 to 21) interacts with ATP; the sequence is GKGGVGKS. Positions 185 and 188 each coordinate [4Fe-4S] cluster.

This sequence belongs to the Mrp/NBP35 ATP-binding proteins family. NUBP2/CFD1 subfamily. In terms of assembly, heterotetramer of 2 Nubp1 and 2 Nubp2 chains. Requires [4Fe-4S] cluster as cofactor.

Its subcellular location is the cytoplasm. In terms of biological role, component of the cytosolic iron-sulfur (Fe/S) protein assembly (CIA) machinery. Required for maturation of extramitochondrial Fe-S proteins. The Nubp1-Nubp2 heterotetramer forms a Fe-S scaffold complex, mediating the de novo assembly of an Fe-S cluster and its transfer to target apoproteins. This chain is Cytosolic Fe-S cluster assembly factor Nubp2 homolog, found in Drosophila persimilis (Fruit fly).